A 647-amino-acid polypeptide reads, in one-letter code: Phosphatidylinositol polyphosphate 5-phosphatase type IV (647 aa).

3 disordered regions span residues 1-80, 101-131, and 177-196; these read MPSK…QPPI, RGSQEDLTVQNGASPCRGSLQDSVAQSPAYS, and HRDAASGGPPSRLASLHASH. Copy 1 of the repeat occupies 52-55; it reads PMPP. The interval 52-243 is 3 X 4 AA repeats of P-X-X-P; the sequence is PMPPFSIPAK…AHSNLGPSRP (192 aa). Over residues 60 to 75 the composition is skewed to polar residues; that stretch reads AKTSNQNPQTKANLIT. Repeat 2 spans residues 76-79; the sequence is PQPP. Ser-103 is modified (phosphoserine). The span at 120–129 shows a compositional bias: polar residues; it reads LQDSVAQSPA. At Thr-197 the chain carries Phosphothreonine. Repeat unit 3 spans residues 240-243; it reads PSRP. Phosphoserine is present on residues Ser-245 and Ser-259. At Cys-644 the chain carries Cysteine methyl ester. A lipid anchor (S-farnesyl cysteine) is attached at Cys-644. A propeptide spans 645 to 647 (removed in mature form); that stretch reads TVS.

The protein belongs to the inositol polyphosphate 5-phosphatase family. In terms of assembly, interacts (when prenylated) with PDE6D; this is important for normal location in cilia. In terms of tissue distribution, highly expressed in testis, in pachytene and diplotene spermatocytes, but not in more mature elongating spermatids. Detected in neurons throughout the brain.

The protein localises to the cytoplasm. Its subcellular location is the cytoskeleton. The protein resides in the cilium axoneme. It localises to the golgi apparatus. It is found in the golgi stack membrane. The protein localises to the cell projection. Its subcellular location is the ruffle. The protein resides in the cell membrane. It localises to the nucleus. The enzyme catalyses a 1,2-diacyl-sn-glycero-3-phospho-(1D-myo-inositol-4,5-bisphosphate) + H2O = a 1,2-diacyl-sn-glycero-3-phospho-(1D-myo-inositol 4-phosphate) + phosphate. It catalyses the reaction a 1,2-diacyl-sn-glycero-3-phospho-(1D-myo-inositol-3,4,5-trisphosphate) + H2O = a 1,2-diacyl-sn-glycero-3-phospho-(1D-myo-inositol-3,4-bisphosphate) + phosphate. The catalysed reaction is a 1,2-diacyl-sn-glycero-3-phospho-(1D-myo-inositol-3,5-bisphosphate) + H2O = a 1,2-diacyl-sn-glycero-3-phospho-(1D-myo-inositol-3-phosphate) + phosphate. Functionally, phosphatidylinositol (PtdIns) phosphatase that specifically hydrolyzes the 5-phosphate of phosphatidylinositol-3,4,5-trisphosphate (PtdIns(3,4,5)P3), phosphatidylinositol 4,5-bisphosphate (PtdIns(4,5)P2) and phosphatidylinositol 3,5-bisphosphate (PtdIns(3,5)P2). Specific for lipid substrates, inactive towards water soluble inositol phosphates. Specific for lipid substrates, inactive towards water soluble inositol phosphates. Plays an essential role in the primary cilium by controlling ciliary growth and phosphoinositide 3-kinase (PI3K) signaling and stability. The polypeptide is Phosphatidylinositol polyphosphate 5-phosphatase type IV (Inpp5e) (Mus musculus (Mouse)).